The sequence spans 726 residues: 1,4-alpha-glucan branching enzyme GlgB (726 aa).

Asp407 functions as the Nucleophile in the catalytic mechanism. Glu460 acts as the Proton donor in catalysis.

This sequence belongs to the glycosyl hydrolase 13 family. GlgB subfamily. As to quaternary structure, monomer.

The catalysed reaction is Transfers a segment of a (1-&gt;4)-alpha-D-glucan chain to a primary hydroxy group in a similar glucan chain.. It functions in the pathway glycan biosynthesis; glycogen biosynthesis. Its function is as follows. Catalyzes the formation of the alpha-1,6-glucosidic linkages in glycogen by scission of a 1,4-alpha-linked oligosaccharide from growing alpha-1,4-glucan chains and the subsequent attachment of the oligosaccharide to the alpha-1,6 position. This is 1,4-alpha-glucan branching enzyme GlgB from Hydrogenovibrio crunogenus (strain DSM 25203 / XCL-2) (Thiomicrospira crunogena).